The chain runs to 463 residues: L-seryl-tRNA(Sec) selenium transferase (463 aa).

N6-(pyridoxal phosphate)lysine is present on lysine 295.

The protein belongs to the SelA family. In terms of assembly, homodecamer; pentamer of dimers. Binds only one seryl-tRNA(Sec) per dimer. Requires pyridoxal 5'-phosphate as cofactor.

It is found in the cytoplasm. It catalyses the reaction L-seryl-tRNA(Sec) + selenophosphate + H(+) = L-selenocysteinyl-tRNA(Sec) + phosphate. Its pathway is aminoacyl-tRNA biosynthesis; selenocysteinyl-tRNA(Sec) biosynthesis; selenocysteinyl-tRNA(Sec) from L-seryl-tRNA(Sec) (bacterial route): step 1/1. In terms of biological role, converts seryl-tRNA(Sec) to selenocysteinyl-tRNA(Sec) required for selenoprotein biosynthesis. The chain is L-seryl-tRNA(Sec) selenium transferase from Escherichia coli (strain 55989 / EAEC).